Consider the following 711-residue polypeptide: Amyloid beta precursor protein binding family B member 1 (711 aa).

Residue S135 is modified to Phosphoserine. Disordered regions lie at residues N140–P257, G277–Q300, and E321–A364. The span at E156–L174 shows a compositional bias: acidic residues. N6-acetyllysine is present on K205. Polar residues predominate over residues S224 to Y235. The WW domain maps to S254–R286. A compositionally biased stretch (polar residues) spans S288 to Q300. PID domains are found at residues N365–F533 and N538–S700. A Phosphoserine; by PKC modification is found at S460. S518 carries the phosphoserine modification. Residue Y548 is modified to Phosphotyrosine; by ABL1. Position 611 is a phosphoserine; by SGK1 (S611). K702 bears the N6-acetyllysine mark.

Component of a complex, at least composed of APBB1, RASD1/DEXRAS1 and APP. Interacts (via PID domain 2) with APP (with the intracellular domain of the amyloid-beta precursor protein). Interacts (via PID domain 2) with RASD1/DEXRAS1; impairs the transcription activation activity. Interacts (via PID domain 1) with KAT5/TIP60. Interacts (via the WW domain) with the proline-rich region of APBB1IP. Interacts with TSHZ1 and TSHZ2. Interacts (via the WW domain) with histone H2AX (when phosphorylated on 'Tyr-142') and the proline-rich region of ENAH. Interacts with MAPK8. Interacts (via PID domain 1) with TSHZ3 (via homeobox domain). Interacts with SET. Found in a trimeric complex with HDAC1 and TSHZ3; the interaction between HDAC1 and APBB1 is mediated by TSHZ3. Interacts (via WWW domain) with NEK6. Interacts (via WWW domain) with ABL1. Interacts with RNF157. Interacts with ARF6. In terms of processing, polyubiquitination by RNF157 leads to degradation by the proteasome. Phosphorylation at Ser-611 by SGK1 promotes its localization to the nucleus. Phosphorylated following nuclear translocation. Phosphorylation at Tyr-547 by ABL1 enhances transcriptional activation activity and reduces the affinity for RASD1/DEXRAS1. Phosphorylated at Ser-460 by PKC upon insulin activation. Post-translationally, acetylation at Lys-205 and Lys-702 by KAT5 promotes its transcription activator activity. As to expression, brain, not in liver, very low in other tissues. The long (neuron-specific) form is expressed only in brain.

It localises to the cell membrane. It is found in the cytoplasm. The protein localises to the nucleus. Its subcellular location is the cell projection. The protein resides in the growth cone. It localises to the nucleus speckle. Functionally, transcription coregulator that can have both coactivator and corepressor functions. Adapter protein that forms a transcriptionally active complex with the gamma-secretase-derived amyloid precursor protein (APP) intracellular domain. Plays a central role in the response to DNA damage by translocating to the nucleus and inducing apoptosis. May act by specifically recognizing and binding histone H2AX phosphorylated on 'Tyr-142' (H2AXY142ph) at double-strand breaks (DSBs), recruiting other pro-apoptosis factors such as MAPK8/JNK1. Required for histone H4 acetylation at double-strand breaks (DSBs). Its ability to specifically bind modified histones and chromatin modifying enzymes such as KAT5/TIP60, probably explains its transcription activation activity. Functions in association with TSHZ3, SET and HDAC factors as a transcriptional repressor, that inhibits the expression of CASP4. Associates with chromatin in a region surrounding the CASP4 transcriptional start site(s). Involved in hippocampal neurite branching and neuromuscular junction formation, as a result plays a role in spatial memory functioning. Plays a role in the maintenance of lens transparency. May play a role in muscle cell strength. Acts as a molecular adapter that functions in neurite outgrowth by activating the RAC1-ARF6 axis upon insulin treatment. In Rattus norvegicus (Rat), this protein is Amyloid beta precursor protein binding family B member 1.